A 981-amino-acid polypeptide reads, in one-letter code: Anoctamin-3 (981 aa).

Positions 1–28 (MVHHSGSIQSFKQQKGMNISKSEITTEA) are enriched in polar residues. Disordered stretches follow at residues 1-32 (MVHH…SLKP) and 67-87 (PTSV…EESR). The Cytoplasmic segment spans residues 1–403 (MVHHSGSIQS…LYFAWLGWYT (403 aa)). The span at 76–87 (DKPEHVTSEESR) shows a compositional bias: basic and acidic residues. The helical transmembrane segment at 404–424 (GMLIPAAVVGLCVFFYGLVTM) threads the bilayer. N-linked (GlcNAc...) asparagine glycosylation is found at N425, N448, and N455. Topologically, residues 425 to 469 (NESQVSQEICKATEVFMCPLCDKNCSLQRLNDSCIYAKVTYLFDN) are extracellular. A helical transmembrane segment spans residues 470-490 (GGTVFFAIFMAIWATVFLEFW). At 491–550 (KRRRSILTYTWDLIEWEEEEETLRPQFEAKYYRMEVINPITGKPEPHQPSSDKVTRLLVS) the chain is on the cytoplasmic side. The chain crosses the membrane as a helical span at residues 551-571 (VSGIFFMISLVITAVFAVVVY). The Extracellular portion of the chain corresponds to 572-592 (RLVVMEQFASFKWNFVKQHWQ). The chain crosses the membrane as a helical span at residues 593 to 613 (FATSGAAVCINFIIIMLLNLA). The Cytoplasmic portion of the chain corresponds to 614 to 640 (YEKIAYLLTNLEYPRTESEWENSFALK). A helical membrane pass occupies residues 641-661 (MFLFQFVNLNSSIFYIAFFLG). The Extracellular portion of the chain corresponds to 662–761 (RFVGHPGKYN…MDEYLEMVLQ (100 aa)). Residues 762–782 (FGFTTIFVAAFPLAPLLALLN) form a helical membrane-spanning segment. Residues 783–810 (NIIEIRLDAYKFVTQWRRPLPARATDIG) lie on the Cytoplasmic side of the membrane. A helical membrane pass occupies residues 811 to 831 (IWLGILEGIGILAVITNAFVI). The Extracellular segment spans residues 832–914 (AITSDYIPRF…QYWHILAARL (83 aa)). N866 is a glycosylation site (N-linked (GlcNAc...) asparagine). The chain crosses the membrane as a helical span at residues 915-935 (AFIIVFEHLVFGIKSFIAYLI). The Cytoplasmic segment spans residues 936–981 (PDIPKGLRERIRREKYLVQEMMYEAELEHLQQQRRKSGQPIHHEWP).

Belongs to the anoctamin family. In terms of assembly, interacts with KCNT1/Slack. In terms of tissue distribution, predominantly expressed in neuronal tissues. Expressed in brain.

It localises to the cell membrane. The enzyme catalyses a 1,2-diacyl-sn-glycero-3-phosphocholine(in) = a 1,2-diacyl-sn-glycero-3-phosphocholine(out). The catalysed reaction is a beta-D-galactosyl-(1&lt;-&gt;1')-N-acylsphing-4-enine(out) = a beta-D-galactosyl-(1&lt;-&gt;1')-N-acylsphing-4-enine(in). Its function is as follows. Has calcium-dependent phospholipid scramblase activity; scrambles phosphatidylcholine and galactosylceramide. Does not exhibit calcium-activated chloride channel (CaCC) activity. Seems to act as potassium channel regulator and may inhibit pain signaling; can facilitate KCNT1/Slack channel activity by promoting its full single-channel conductance at very low sodium concentrations and by increasing its sodium sensitivity. This chain is Anoctamin-3, found in Mus musculus (Mouse).